Here is a 422-residue protein sequence, read N- to C-terminus: Glucose-1-phosphate adenylyltransferase (422 aa).

Alpha-D-glucose 1-phosphate contacts are provided by residues Tyr108, Gly173, 188-189 (EK), and Ser206.

This sequence belongs to the bacterial/plant glucose-1-phosphate adenylyltransferase family. As to quaternary structure, homotetramer.

The enzyme catalyses alpha-D-glucose 1-phosphate + ATP + H(+) = ADP-alpha-D-glucose + diphosphate. The protein operates within glycan biosynthesis; glycogen biosynthesis. Its function is as follows. Involved in the biosynthesis of ADP-glucose, a building block required for the elongation reactions to produce glycogen. Catalyzes the reaction between ATP and alpha-D-glucose 1-phosphate (G1P) to produce pyrophosphate and ADP-Glc. The polypeptide is Glucose-1-phosphate adenylyltransferase (Paraburkholderia phymatum (strain DSM 17167 / CIP 108236 / LMG 21445 / STM815) (Burkholderia phymatum)).